Consider the following 408-residue polypeptide: 2,3-bisphosphoglycerate-independent phosphoglycerate mutase 1 (408 aa).

The protein belongs to the BPG-independent phosphoglycerate mutase family. A-PGAM subfamily. In terms of assembly, monomer. Mn(2+) is required as a cofactor.

The enzyme catalyses (2R)-2-phosphoglycerate = (2R)-3-phosphoglycerate. It participates in carbohydrate degradation; glycolysis; pyruvate from D-glyceraldehyde 3-phosphate: step 3/5. In terms of biological role, catalyzes the interconversion of 2-phosphoglycerate and 3-phosphoglycerate. The chain is 2,3-bisphosphoglycerate-independent phosphoglycerate mutase 1 (apgM1) from Archaeoglobus fulgidus (strain ATCC 49558 / DSM 4304 / JCM 9628 / NBRC 100126 / VC-16).